Here is a 364-residue protein sequence, read N- to C-terminus: DNA replication and repair protein RecF (364 aa).

Residue Gly30–Thr37 coordinates ATP.

It belongs to the RecF family.

The protein resides in the cytoplasm. In terms of biological role, the RecF protein is involved in DNA metabolism; it is required for DNA replication and normal SOS inducibility. RecF binds preferentially to single-stranded, linear DNA. It also seems to bind ATP. The chain is DNA replication and repair protein RecF from Clostridium botulinum (strain 657 / Type Ba4).